The primary structure comprises 497 residues: NAD(P)H-quinone oxidoreductase subunit 2, chloroplastic (497 aa).

Helical transmembrane passes span 13–33, 37–57, 76–96, 103–123, 129–149, 164–184, 206–226, 240–260, 274–294, 311–331, 332–352, 373–393, 406–426, and 462–482; these read VILP…LDLI, SAWL…ALVF, FTIS…LIST, GMGL…GLFL, LVTV…LVGY, LLMG…LYGL, IAVW…LSAF, PTPV…ALAT, WHVL…LIAA, AGYL…GMIT, YMVT…LFGL, AFCL…AGFF, GLYL…YYYL, and VGIA…NPII.

It belongs to the complex I subunit 2 family. As to quaternary structure, NDH is composed of at least 16 different subunits, 5 of which are encoded in the nucleus.

It is found in the plastid. Its subcellular location is the chloroplast thylakoid membrane. The enzyme catalyses a plastoquinone + NADH + (n+1) H(+)(in) = a plastoquinol + NAD(+) + n H(+)(out). It catalyses the reaction a plastoquinone + NADPH + (n+1) H(+)(in) = a plastoquinol + NADP(+) + n H(+)(out). In terms of biological role, NDH shuttles electrons from NAD(P)H:plastoquinone, via FMN and iron-sulfur (Fe-S) centers, to quinones in the photosynthetic chain and possibly in a chloroplast respiratory chain. The immediate electron acceptor for the enzyme in this species is believed to be plastoquinone. Couples the redox reaction to proton translocation, and thus conserves the redox energy in a proton gradient. This Zygnema circumcarinatum (Green alga) protein is NAD(P)H-quinone oxidoreductase subunit 2, chloroplastic.